The chain runs to 316 residues: Ribosomal RNA small subunit methyltransferase H (316 aa).

Residues 35-37 (AGH), aspartate 55, phenylalanine 84, aspartate 105, and glutamine 112 contribute to the S-adenosyl-L-methionine site.

The protein belongs to the methyltransferase superfamily. RsmH family.

It is found in the cytoplasm. The catalysed reaction is cytidine(1402) in 16S rRNA + S-adenosyl-L-methionine = N(4)-methylcytidine(1402) in 16S rRNA + S-adenosyl-L-homocysteine + H(+). Specifically methylates the N4 position of cytidine in position 1402 (C1402) of 16S rRNA. The sequence is that of Ribosomal RNA small subunit methyltransferase H from Streptococcus pneumoniae (strain ATCC 700669 / Spain 23F-1).